The chain runs to 216 residues: Ribosomal RNA large subunit methyltransferase E (216 aa).

Residues G71, W73, D88, D104, and D126 each contribute to the S-adenosyl-L-methionine site. K166 functions as the Proton acceptor in the catalytic mechanism.

This sequence belongs to the class I-like SAM-binding methyltransferase superfamily. RNA methyltransferase RlmE family.

The protein resides in the cytoplasm. The catalysed reaction is uridine(2552) in 23S rRNA + S-adenosyl-L-methionine = 2'-O-methyluridine(2552) in 23S rRNA + S-adenosyl-L-homocysteine + H(+). In terms of biological role, specifically methylates the uridine in position 2552 of 23S rRNA at the 2'-O position of the ribose in the fully assembled 50S ribosomal subunit. This chain is Ribosomal RNA large subunit methyltransferase E, found in Wolbachia sp. subsp. Brugia malayi (strain TRS).